Here is a 185-residue protein sequence, read N- to C-terminus: Elongation factor P (185 aa).

The protein belongs to the elongation factor P family.

Its subcellular location is the cytoplasm. It participates in protein biosynthesis; polypeptide chain elongation. Involved in peptide bond synthesis. Stimulates efficient translation and peptide-bond synthesis on native or reconstituted 70S ribosomes in vitro. Probably functions indirectly by altering the affinity of the ribosome for aminoacyl-tRNA, thus increasing their reactivity as acceptors for peptidyl transferase. In Bordetella petrii (strain ATCC BAA-461 / DSM 12804 / CCUG 43448), this protein is Elongation factor P.